The following is a 94-amino-acid chain: Aspartyl/glutamyl-tRNA(Asn/Gln) amidotransferase subunit C (94 aa).

Belongs to the GatC family. In terms of assembly, heterotrimer of A, B and C subunits.

It catalyses the reaction L-glutamyl-tRNA(Gln) + L-glutamine + ATP + H2O = L-glutaminyl-tRNA(Gln) + L-glutamate + ADP + phosphate + H(+). The enzyme catalyses L-aspartyl-tRNA(Asn) + L-glutamine + ATP + H2O = L-asparaginyl-tRNA(Asn) + L-glutamate + ADP + phosphate + 2 H(+). Its function is as follows. Allows the formation of correctly charged Asn-tRNA(Asn) or Gln-tRNA(Gln) through the transamidation of misacylated Asp-tRNA(Asn) or Glu-tRNA(Gln) in organisms which lack either or both of asparaginyl-tRNA or glutaminyl-tRNA synthetases. The reaction takes place in the presence of glutamine and ATP through an activated phospho-Asp-tRNA(Asn) or phospho-Glu-tRNA(Gln). This chain is Aspartyl/glutamyl-tRNA(Asn/Gln) amidotransferase subunit C, found in Opitutus terrae (strain DSM 11246 / JCM 15787 / PB90-1).